The chain runs to 374 residues: Heme A synthase (374 aa).

A disordered region spans residues 1 to 22; sequence MSDHIRAASSPSRHGSEHGWQH. Transmembrane regions (helical) follow at residues 32–52, 118–138, 149–169, 184–204, and 226–246; these read ILVATWMFTLCFMILVMVMLG, RLWGRLIGLVLLLPLIFLAVT, LILIFVLGGLQGAVGWFMVAS, VVHLSFALLLYSALLWTALSV, and LGLVCITIIAGGFVAGIHAGL. His-281 is a heme binding site. A run of 3 helical transmembrane segments spans residues 283–300, 309–329, and 332–352; these read LLATLTALTALLTGLIGF, AVLPLMVAVILQYALGIATLL, and VAVPVAVVHQGMAVLLLTAAI. His-340 serves as a coordination point for heme.

The protein belongs to the COX15/CtaA family. Type 2 subfamily. In terms of assembly, interacts with CtaB. It depends on heme b as a cofactor.

The protein resides in the cell membrane. It carries out the reaction Fe(II)-heme o + 2 A + H2O = Fe(II)-heme a + 2 AH2. The protein operates within porphyrin-containing compound metabolism; heme A biosynthesis; heme A from heme O: step 1/1. Functionally, catalyzes the conversion of heme O to heme A by two successive hydroxylations of the methyl group at C8. The first hydroxylation forms heme I, the second hydroxylation results in an unstable dihydroxymethyl group, which spontaneously dehydrates, resulting in the formyl group of heme A. The sequence is that of Heme A synthase from Granulibacter bethesdensis (strain ATCC BAA-1260 / CGDNIH1).